The sequence spans 467 residues: Glutamine synthetase (467 aa).

The GS beta-grasp domain maps to 14–98 (EEVEYVDIRF…VHCNVVEPDT (85 aa)). One can recognise a GS catalytic domain in the interval 106 to 467 (PRGAAVKAEA…PVEYQMYYSC (362 aa)). Mg(2+)-binding residues include Glu-131 and Glu-133. Asp-209 serves as a coordination point for ATP. Mg(2+)-binding residues include Glu-214 and Glu-221. L-glutamate-binding positions include 265 to 266 (NG) and Gly-266. A Mg(2+)-binding site is contributed by His-270. Residues 272 to 274 (NMS) and Ser-274 contribute to the ATP site. L-glutamate-binding residues include Arg-320, Glu-326, and Arg-338. Residues Arg-338 and Arg-343 each contribute to the ATP site. Glu-356 serves as a coordination point for Mg(2+). L-glutamate is bound at residue Arg-358. An O-AMP-tyrosine modification is found at Tyr-396.

It belongs to the glutamine synthetase family. In terms of assembly, oligomer of 12 subunits arranged in the form of two hexameric ring. It depends on Mg(2+) as a cofactor.

Its subcellular location is the cytoplasm. The enzyme catalyses L-glutamate + NH4(+) + ATP = L-glutamine + ADP + phosphate + H(+). Its activity is regulated as follows. The activity of this enzyme could be controlled by adenylation under conditions of abundant glutamine. In terms of biological role, catalyzes the ATP-dependent biosynthesis of glutamine from glutamate and ammonia. This Cereibacter sphaeroides (Rhodobacter sphaeroides) protein is Glutamine synthetase.